Consider the following 312-residue polypeptide: 2,3-dihydroxyphenylpropionate/2,3-dihydroxicinnamic acid 1,2-dioxygenase (312 aa).

The Proton donor role is filled by H115. Residue H179 is the Proton acceptor of the active site.

This sequence belongs to the LigB/MhpB extradiol dioxygenase family. In terms of assembly, homotetramer. Fe(2+) is required as a cofactor.

The catalysed reaction is 3-(2,3-dihydroxyphenyl)propanoate + O2 = (2Z,4E)-2-hydroxy-6-oxonona-2,4-dienedioate + H(+). It carries out the reaction (2E)-3-(2,3-dihydroxyphenyl)prop-2-enoate + O2 = (2Z,4E,7E)-2-hydroxy-6-oxonona-2,4,7-trienedioate + H(+). It functions in the pathway aromatic compound metabolism; 3-phenylpropanoate degradation. Functionally, catalyzes the non-heme iron(II)-dependent oxidative cleavage of 2,3-dihydroxyphenylpropionic acid and 2,3-dihydroxicinnamic acid into 2-hydroxy-6-ketononadienedioate and 2-hydroxy-6-ketononatrienedioate, respectively. The polypeptide is 2,3-dihydroxyphenylpropionate/2,3-dihydroxicinnamic acid 1,2-dioxygenase (Mycolicibacterium paratuberculosis (strain ATCC BAA-968 / K-10) (Mycobacterium paratuberculosis)).